A 200-amino-acid polypeptide reads, in one-letter code: Translation machinery-associated protein 22 (200 aa).

Residues 106 to 177 (VQIKRVERNK…DVLEWLVEVH (72 aa)) form the SUI1 domain.

Belongs to the DENR family. In terms of assembly, interacts with the 40S ribosomal subunit.

It is found in the cytoplasm. The sequence is that of Translation machinery-associated protein 22 (TMA22) from Coccidioides immitis (strain RS) (Valley fever fungus).